The following is a 378-amino-acid chain: Queuine tRNA-ribosyltransferase (378 aa).

Aspartate 89 serves as the catalytic Proton acceptor. Substrate is bound by residues 89 to 93, aspartate 143, glutamine 187, and glycine 214; that span reads DSGGF. The tract at residues 245 to 251 is RNA binding; sequence GVGKPED. Catalysis depends on aspartate 264, which acts as the Nucleophile. The segment at 269–273 is RNA binding; important for wobble base 34 recognition; the sequence is TRNAR. Zn(2+)-binding residues include cysteine 302, cysteine 304, cysteine 307, and histidine 333.

Belongs to the queuine tRNA-ribosyltransferase family. As to quaternary structure, homodimer. Within each dimer, one monomer is responsible for RNA recognition and catalysis, while the other monomer binds to the replacement base PreQ1. Zn(2+) is required as a cofactor.

The catalysed reaction is 7-aminomethyl-7-carbaguanine + guanosine(34) in tRNA = 7-aminomethyl-7-carbaguanosine(34) in tRNA + guanine. The protein operates within tRNA modification; tRNA-queuosine biosynthesis. Functionally, catalyzes the base-exchange of a guanine (G) residue with the queuine precursor 7-aminomethyl-7-deazaguanine (PreQ1) at position 34 (anticodon wobble position) in tRNAs with GU(N) anticodons (tRNA-Asp, -Asn, -His and -Tyr). Catalysis occurs through a double-displacement mechanism. The nucleophile active site attacks the C1' of nucleotide 34 to detach the guanine base from the RNA, forming a covalent enzyme-RNA intermediate. The proton acceptor active site deprotonates the incoming PreQ1, allowing a nucleophilic attack on the C1' of the ribose to form the product. After dissociation, two additional enzymatic reactions on the tRNA convert PreQ1 to queuine (Q), resulting in the hypermodified nucleoside queuosine (7-(((4,5-cis-dihydroxy-2-cyclopenten-1-yl)amino)methyl)-7-deazaguanosine). The chain is Queuine tRNA-ribosyltransferase from Yersinia enterocolitica serotype O:8 / biotype 1B (strain NCTC 13174 / 8081).